A 150-amino-acid chain; its full sequence is D-aminoacyl-tRNA deacylase (150 aa).

The Gly-cisPro motif, important for rejection of L-amino acids signature appears at 138–139 (GP).

It belongs to the DTD family. Homodimer.

It is found in the cytoplasm. It carries out the reaction glycyl-tRNA(Ala) + H2O = tRNA(Ala) + glycine + H(+). It catalyses the reaction a D-aminoacyl-tRNA + H2O = a tRNA + a D-alpha-amino acid + H(+). An aminoacyl-tRNA editing enzyme that deacylates mischarged D-aminoacyl-tRNAs. Also deacylates mischarged glycyl-tRNA(Ala), protecting cells against glycine mischarging by AlaRS. Acts via tRNA-based rather than protein-based catalysis; rejects L-amino acids rather than detecting D-amino acids in the active site. By recycling D-aminoacyl-tRNA to D-amino acids and free tRNA molecules, this enzyme counteracts the toxicity associated with the formation of D-aminoacyl-tRNA entities in vivo and helps enforce protein L-homochirality. The chain is D-aminoacyl-tRNA deacylase from Chlorobium phaeobacteroides (strain DSM 266 / SMG 266 / 2430).